Consider the following 180-residue polypeptide: D-glycero-beta-D-manno-heptose-1,7-bisphosphate 7-phosphatase (180 aa).

The active-site Nucleophile is the Asp-14. Positions 14 and 16 each coordinate Mg(2+). Substrate contacts are provided by residues 14–16, 22–25, and 56–59; these read DRD, NDHY, and TNQS. The active-site Proton donor is Asp-16. Zn(2+) contacts are provided by Cys-95, His-97, Cys-110, and His-112. 113 to 114 is a binding site for substrate; it reads RK. Asp-139 contributes to the Mg(2+) binding site.

Belongs to the gmhB family. Monomer. Requires Mg(2+) as cofactor.

The protein localises to the cytoplasm. The catalysed reaction is D-glycero-beta-D-manno-heptose 1,7-bisphosphate + H2O = D-glycero-beta-D-manno-heptose 1-phosphate + phosphate. The protein operates within nucleotide-sugar biosynthesis; ADP-L-glycero-beta-D-manno-heptose biosynthesis; ADP-L-glycero-beta-D-manno-heptose from D-glycero-beta-D-manno-heptose 7-phosphate: step 2/4. Its pathway is bacterial outer membrane biogenesis; LPS core biosynthesis. Functionally, converts the D-glycero-beta-D-manno-heptose 1,7-bisphosphate (beta-HBP) intermediate into D-glycero-beta-D-manno-heptose 1-phosphate by removing the phosphate group at the C-7 position. Also catalyzes the dephosphorylation of D-glycero-alpha-D-manno-heptose 1,7-bisphosphate in vitro. This chain is D-glycero-beta-D-manno-heptose-1,7-bisphosphate 7-phosphatase, found in Rhodopseudomonas palustris (strain ATCC BAA-98 / CGA009).